Here is a 424-residue protein sequence, read N- to C-terminus: ATP-sensitive inward rectifier potassium channel 8 (424 aa).

Residues 1 to 69 lie on the Cytoplasmic side of the membrane; that stretch reads MLARKSIIPE…IFTTLVDLKW (69 aa). Ser-6 is modified (phosphoserine). The chain crosses the membrane as a helical span at residues 70–94; that stretch reads RHTLVIFTMSFLCSWLLFAIMWWLV. Topologically, residues 95 to 126 are extracellular; sequence AFAHGDIYAYMEKGTMEKSGLESAVCVTNVRS. Residues 127 to 138 constitute an intramembrane region (helical; Pore-forming); that stretch reads FTSAFLFSIEVQ. Residues 139–145 constitute an intramembrane region (pore-forming); that stretch reads VTIGFGG. Residues 140–145 carry the Selectivity filter motif; sequence TIGFGG. Over 146-154 the chain is Extracellular; the sequence is RMMTEECPL. A helical membrane pass occupies residues 155–176; it reads AITVLILQNIVGLIINAVMLGC. At 177–424 the chain is on the cytoplasmic side; it reads IFMKTAQAHR…PEGNQCPSES (248 aa). The interval 373 to 409 is disordered; sequence ELSHQNSLRKRNSMRRNNSMRRNNSIRRNNSSLMVPK. Residues 387 to 404 show a composition bias toward low complexity; that stretch reads RRNNSMRRNNSIRRNNSS.

It belongs to the inward rectifier-type potassium channel (TC 1.A.2.1) family. KCNJ8 subfamily. In terms of assembly, interacts with ABCC9.

The protein localises to the membrane. It catalyses the reaction K(+)(in) = K(+)(out). In terms of biological role, inward rectifier potassium channels are characterized by a greater tendency to allow potassium to flow into the cell rather than out of it. Their voltage dependence is regulated by the concentration of extracellular potassium; as external potassium is raised, the voltage range of the channel opening shifts to more positive voltages. The inward rectification is mainly due to the blockage of outward current by internal magnesium. This channel is activated by internal ATP and can be blocked by external barium. Can form a sulfonylurea-sensitive but ATP-insensitive potassium channel with ABCC9. This Mus musculus (Mouse) protein is ATP-sensitive inward rectifier potassium channel 8 (Kcnj8).